We begin with the raw amino-acid sequence, 159 residues long: Small ribosomal subunit protein bS6 (159 aa).

Over residues 93–151 (VDEHEEGPSAMMRKADRDRERDDRGPREGGFRGDREGRGDREGGGFRGDRGPRRPREDA) the composition is skewed to basic and acidic residues. The disordered stretch occupies residues 93 to 159 (VDEHEEGPSA…DADTAAASEE (67 aa)).

This sequence belongs to the bacterial ribosomal protein bS6 family.

In terms of biological role, binds together with bS18 to 16S ribosomal RNA. The protein is Small ribosomal subunit protein bS6 of Rhodopseudomonas palustris (strain HaA2).